We begin with the raw amino-acid sequence, 273 residues long: Ribosomal RNA small subunit methyltransferase A (273 aa).

Residues Asn18, Leu20, Gly45, Glu66, Asp91, and Asn113 each coordinate S-adenosyl-L-methionine.

Belongs to the class I-like SAM-binding methyltransferase superfamily. rRNA adenine N(6)-methyltransferase family. RsmA subfamily.

The protein localises to the cytoplasm. It carries out the reaction adenosine(1518)/adenosine(1519) in 16S rRNA + 4 S-adenosyl-L-methionine = N(6)-dimethyladenosine(1518)/N(6)-dimethyladenosine(1519) in 16S rRNA + 4 S-adenosyl-L-homocysteine + 4 H(+). In terms of biological role, specifically dimethylates two adjacent adenosines (A1518 and A1519) in the loop of a conserved hairpin near the 3'-end of 16S rRNA in the 30S particle. May play a critical role in biogenesis of 30S subunits. The polypeptide is Ribosomal RNA small subunit methyltransferase A (Shigella dysenteriae serotype 1 (strain Sd197)).